The sequence spans 122 residues: Large ribosomal subunit protein uL14 (122 aa).

This sequence belongs to the universal ribosomal protein uL14 family. In terms of assembly, part of the 50S ribosomal subunit. Forms a cluster with proteins L3 and L19. In the 70S ribosome, L14 and L19 interact and together make contacts with the 16S rRNA in bridges B5 and B8.

Its function is as follows. Binds to 23S rRNA. Forms part of two intersubunit bridges in the 70S ribosome. The chain is Large ribosomal subunit protein uL14 from Geobacillus sp. (strain WCH70).